Reading from the N-terminus, the 366-residue chain is Succinyl-diaminopimelate desuccinylase (366 aa).

His66 serves as a coordination point for Zn(2+). Asp68 is an active-site residue. Position 97 (Asp97) interacts with Zn(2+). The active-site Proton acceptor is Glu127. Residues Glu128, Glu156, and His341 each coordinate Zn(2+).

Belongs to the peptidase M20A family. DapE subfamily. Homodimer. The cofactor is Zn(2+). It depends on Co(2+) as a cofactor.

The catalysed reaction is N-succinyl-(2S,6S)-2,6-diaminopimelate + H2O = (2S,6S)-2,6-diaminopimelate + succinate. It functions in the pathway amino-acid biosynthesis; L-lysine biosynthesis via DAP pathway; LL-2,6-diaminopimelate from (S)-tetrahydrodipicolinate (succinylase route): step 3/3. Functionally, catalyzes the hydrolysis of N-succinyl-L,L-diaminopimelic acid (SDAP), forming succinate and LL-2,6-diaminopimelate (DAP), an intermediate involved in the bacterial biosynthesis of lysine and meso-diaminopimelic acid, an essential component of bacterial cell walls. In Aliarcobacter butzleri (strain RM4018) (Arcobacter butzleri), this protein is Succinyl-diaminopimelate desuccinylase.